The primary structure comprises 157 residues: Mediator of RNA polymerase II transcription subunit 10 (157 aa).

The protein belongs to the Mediator complex subunit 10 family. As to quaternary structure, component of the Mediator complex, which is composed of at least 21 subunits that form three structurally distinct submodules. The Mediator head module contains MED6, MED8, MED11, SRB4/MED17, SRB5/MED18, ROX3/MED19, SRB2/MED20 and SRB6/MED22, the middle module contains MED1, MED4, NUT1/MED5, MED7, CSE2/MED9, NUT2/MED10, SRB7/MED21 and SOH1/MED31, and the tail module contains MED2, PGD1/MED3, RGR1/MED14, GAL11/MED15 and SIN4/MED16. The head and the middle modules interact directly with RNA polymerase II, whereas the elongated tail module interacts with gene-specific regulatory proteins. NUT2/MED10 interacts directly with SRB7/MED21.

Its subcellular location is the nucleus. In terms of biological role, component of the Mediator complex, a coactivator involved in the regulated transcription of nearly all RNA polymerase II-dependent genes. Mediator functions as a bridge to convey information from gene-specific regulatory proteins to the basal RNA polymerase II transcription machinery. The Mediator complex, having a compact conformation in its free form, is recruited to promoters by direct interactions with regulatory proteins and serves for the assembly of a functional preinitiation complex with RNA polymerase II and the general transcription factors. The Mediator complex unfolds to an extended conformation and partially surrounds RNA polymerase II, specifically interacting with the unphosphorylated form of the C-terminal domain (CTD) of RNA polymerase II. The Mediator complex dissociates from the RNA polymerase II holoenzyme and stays at the promoter when transcriptional elongation begins. This chain is Mediator of RNA polymerase II transcription subunit 10 (NUT2), found in Saccharomyces cerevisiae (strain ATCC 204508 / S288c) (Baker's yeast).